Reading from the N-terminus, the 271-residue chain is UPF0328 protein ECU09_0020 (271 aa).

It belongs to the UPF0328 family.

The protein is UPF0328 protein ECU09_0020 of Encephalitozoon cuniculi (strain GB-M1) (Microsporidian parasite).